Consider the following 401-residue polypeptide: Type I restriction enzyme EcoprrI specificity subunit (401 aa).

It belongs to the type-I restriction system S methylase family. The type I restriction/modification system is composed of three polypeptides R, M and S; the restriction enzyme has stoichiometry R(2)M(2)S(1) while the methyltransferase is M(2)S(1).

Functionally, the specificity (S) subunit of a type I restriction enzyme; this subunit dictates DNA sequence specificity. The M and S subunits together form a methyltransferase (MTase) that methylates two adenine residues of the sequence 5'-CCAN(7)ATGC-3'. In the presence of the R subunit the complex can also act as an endonuclease, binding to the same target sequence but cutting the DNA some distance from this site. Whether the DNA is cut or modified depends on the methylation state of the target sequence. When the target site is unmodified, the DNA is cut. When the target site is hemimethylated, the complex acts as a maintenance MTase modifying the DNA so that both strands become methylated. After locating a non-methylated recognition site, the enzyme complex serves as a molecular motor that translocates DNA in an ATP-dependent manner until a collision occurs that triggers cleavage. This chain is Type I restriction enzyme EcoprrI specificity subunit (prrB), found in Escherichia coli.